The following is a 372-amino-acid chain: 4-hydroxy-3-methylbut-2-en-1-yl diphosphate synthase (flavodoxin) (372 aa).

Cysteine 270, cysteine 273, cysteine 305, and glutamate 312 together coordinate [4Fe-4S] cluster.

Belongs to the IspG family. [4Fe-4S] cluster serves as cofactor.

The enzyme catalyses (2E)-4-hydroxy-3-methylbut-2-enyl diphosphate + oxidized [flavodoxin] + H2O + 2 H(+) = 2-C-methyl-D-erythritol 2,4-cyclic diphosphate + reduced [flavodoxin]. Its pathway is isoprenoid biosynthesis; isopentenyl diphosphate biosynthesis via DXP pathway; isopentenyl diphosphate from 1-deoxy-D-xylulose 5-phosphate: step 5/6. In terms of biological role, converts 2C-methyl-D-erythritol 2,4-cyclodiphosphate (ME-2,4cPP) into 1-hydroxy-2-methyl-2-(E)-butenyl 4-diphosphate. This Vibrio vulnificus (strain CMCP6) protein is 4-hydroxy-3-methylbut-2-en-1-yl diphosphate synthase (flavodoxin).